A 509-amino-acid chain; its full sequence is ATP synthase subunit beta (509 aa).

Residues 1-28 (MAKAATPKETAAAKKPAAPKKAASAKTA) are disordered. ATP is bound at residue 187–194 (GGAGVGKT).

The protein belongs to the ATPase alpha/beta chains family. As to quaternary structure, F-type ATPases have 2 components, CF(1) - the catalytic core - and CF(0) - the membrane proton channel. CF(1) has five subunits: alpha(3), beta(3), gamma(1), delta(1), epsilon(1). CF(0) has three main subunits: a(1), b(2) and c(9-12). The alpha and beta chains form an alternating ring which encloses part of the gamma chain. CF(1) is attached to CF(0) by a central stalk formed by the gamma and epsilon chains, while a peripheral stalk is formed by the delta and b chains.

The protein resides in the cell inner membrane. The enzyme catalyses ATP + H2O + 4 H(+)(in) = ADP + phosphate + 5 H(+)(out). Produces ATP from ADP in the presence of a proton gradient across the membrane. The catalytic sites are hosted primarily by the beta subunits. This is ATP synthase subunit beta from Sinorhizobium medicae (strain WSM419) (Ensifer medicae).